We begin with the raw amino-acid sequence, 169 residues long: Peptide methionine sulfoxide reductase MsrA (169 aa).

The active site involves Cys10.

It belongs to the MsrA Met sulfoxide reductase family.

The catalysed reaction is L-methionyl-[protein] + [thioredoxin]-disulfide + H2O = L-methionyl-(S)-S-oxide-[protein] + [thioredoxin]-dithiol. The enzyme catalyses [thioredoxin]-disulfide + L-methionine + H2O = L-methionine (S)-S-oxide + [thioredoxin]-dithiol. Functionally, has an important function as a repair enzyme for proteins that have been inactivated by oxidation. Catalyzes the reversible oxidation-reduction of methionine sulfoxide in proteins to methionine. This is Peptide methionine sulfoxide reductase MsrA from Streptococcus equi subsp. zooepidemicus (strain MGCS10565).